Reading from the N-terminus, the 300-residue chain is Ubiquinone biosynthesis protein COQ4, mitochondrial (300 aa).

Residues histidine 173, aspartate 174, histidine 177, and glutamate 189 each contribute to the Zn(2+) site.

Belongs to the COQ4 family. As to quaternary structure, component of a multi-subunit COQ enzyme complex, composed of at least COQ3, COQ4, COQ5, COQ6, COQ7 and COQ9. It depends on Zn(2+) as a cofactor.

Its subcellular location is the mitochondrion inner membrane. The catalysed reaction is a 4-hydroxy-3-methoxy-5-(all-trans-polyprenyl)benzoate + H(+) = a 2-methoxy-6-(all-trans-polyprenyl)phenol + CO2. The protein operates within cofactor biosynthesis; ubiquinone biosynthesis. Functionally, lyase that catalyzes the C1-decarboxylation of 4-hydroxy-3-methoxy-5-(all-trans-polyprenyl)benzoic acid into 2-methoxy-6-(all-trans-polyprenyl)phenol during ubiquinone biosynthesis. This is Ubiquinone biosynthesis protein COQ4, mitochondrial from Cryptococcus neoformans var. neoformans serotype D (strain JEC21 / ATCC MYA-565) (Filobasidiella neoformans).